The primary structure comprises 563 residues: Cytochrome b (563 aa).

The next 12 helical transmembrane spans lie at 36 to 61 (SYWL…LLYY), 81 to 104 (SVLL…HMFR), 119 to 141 (WVTG…SLVS), 193 to 220 (RLLG…ERYG), 255 to 276 (LSIV…ANIN), 326 to 345 (ILTI…LPFL), 358 to 379 (FWTW…WGYL), 387 to 409 (TSAQ…YLWP), 436 to 454 (ILLG…FNFI), 458 to 476 (TLIN…IYAL), 505 to 527 (IAFF…MWTL), and 539 to 557 (MDLG…LYHY). Heme-binding residues include H87 and H101. Heme is bound by residues H198 and H212.

Belongs to the cytochrome b family. It is a component of at least 2 distinct terminal oxidases, the quinol oxidase (SoxABC) and the alternate quinol oxidase with the core components SoxM and a Rieske Fe-S protein.

Its subcellular location is the cell membrane. Functionally, binds 2 heme groups (b586 and b606) which are not covalently bound to the protein. The chain is Cytochrome b (soxC) from Sulfolobus acidocaldarius (strain ATCC 33909 / DSM 639 / JCM 8929 / NBRC 15157 / NCIMB 11770).